Consider the following 754-residue polypeptide: 5-methyltetrahydropteroyltriglutamate--homocysteine methyltransferase (754 aa).

Residues 15-18 (RELK) and lysine 114 contribute to the 5-methyltetrahydropteroyltri-L-glutamate site. Residues 430–432 (IGS) and glutamate 483 contribute to the L-homocysteine site. L-methionine-binding positions include 430–432 (IGS) and glutamate 483. 5-methyltetrahydropteroyltri-L-glutamate contacts are provided by residues 514 to 515 (RC) and tryptophan 560. Aspartate 598 provides a ligand contact to L-homocysteine. An L-methionine-binding site is contributed by aspartate 598. Residue glutamate 604 participates in 5-methyltetrahydropteroyltri-L-glutamate binding. Zn(2+)-binding residues include histidine 641, cysteine 643, and glutamate 665. Residue histidine 694 is the Proton donor of the active site. Cysteine 726 is a Zn(2+) binding site.

This sequence belongs to the vitamin-B12 independent methionine synthase family. Zn(2+) serves as cofactor.

The catalysed reaction is 5-methyltetrahydropteroyltri-L-glutamate + L-homocysteine = tetrahydropteroyltri-L-glutamate + L-methionine. Its pathway is amino-acid biosynthesis; L-methionine biosynthesis via de novo pathway; L-methionine from L-homocysteine (MetE route): step 1/1. Its function is as follows. Catalyzes the transfer of a methyl group from 5-methyltetrahydrofolate to homocysteine resulting in methionine formation. This Campylobacter jejuni subsp. doylei (strain ATCC BAA-1458 / RM4099 / 269.97) protein is 5-methyltetrahydropteroyltriglutamate--homocysteine methyltransferase.